The following is a 426-amino-acid chain: Protein arginine N-methyltransferase 2 (426 aa).

Disordered stretches follow at residues 65–88 and 155–175; these read DEEE…GQES and DEEM…AVAA. Residues 73 to 88 show a composition bias toward polar residues; sequence NGVQTNGDRQTHGQES. The segment covering 155-168 has biased composition (acidic residues); the sequence is DEEMEEDGEQEQEQ. Positions 207 to 426 constitute an RMT2 domain; that stretch reads PSVTSSRYLN…YRLPLCKYMD (220 aa). S-adenosyl-L-methionine contacts are provided by residues tyrosine 214, methionine 243, 263–268, 284–286, 311–312, and aspartate 331; these read HGMGIV, EAH, and WQ.

The protein belongs to the class I-like SAM-binding methyltransferase superfamily. RMT2 methyltransferase family. As to quaternary structure, monomer.

The protein localises to the cytoplasm. It localises to the nucleus. Functionally, S-adenosyl-L-methionine-dependent protein-arginine N-methyltransferase that methylates the delta-nitrogen atom of arginine residues to form N5-methylarginine (type IV) in target proteins. Monomethylates ribosomal protein L12. In Emericella nidulans (strain FGSC A4 / ATCC 38163 / CBS 112.46 / NRRL 194 / M139) (Aspergillus nidulans), this protein is Protein arginine N-methyltransferase 2.